We begin with the raw amino-acid sequence, 501 residues long: DNA nucleotidylexotransferase (501 aa).

Positions 11–17 match the Nuclear localization signal motif; sequence KKRKRPV. Residues 24–121 form the BRCT domain; sequence QVEVKFKEVT…RPVRVETRHS (98 aa). The involved in DNA binding stretch occupies residues 249 to 253; it reads VGPKT. Residues 324-329 and 333-336 contribute to the a 2'-deoxyribonucleoside 5'-triphosphate site; these read GFRRGK and HDVD. The Mg(2+) site is built by Asp-334, Asp-336, and Asp-426. 441-442 serves as a coordination point for a 2'-deoxyribonucleoside 5'-triphosphate; sequence GW.

It belongs to the DNA polymerase type-X family. Requires Mg(2+) as cofactor.

The protein resides in the nucleus. The enzyme catalyses DNA(n) + a 2'-deoxyribonucleoside 5'-triphosphate = DNA(n+1) + diphosphate. In terms of biological role, template-independent DNA polymerase which catalyzes the random addition of deoxynucleoside 5'-triphosphate to the 3'-end of a DNA initiator. One of the in vivo functions of this enzyme is the addition of nucleotides at the junction (N region) of rearranged Ig heavy chain and T-cell receptor gene segments during the maturation of B- and T-cells. In Oncorhynchus mykiss (Rainbow trout), this protein is DNA nucleotidylexotransferase (dntt).